A 128-amino-acid polypeptide reads, in one-letter code: Centrosomal protein 15 (128 aa).

The protein localises to the cell projection. It localises to the cilium. In terms of biological role, may play a role in ciliary assembly. The sequence is that of Centrosomal protein 15 from Homo sapiens (Human).